We begin with the raw amino-acid sequence, 454 residues long: Bifunctional protein GlmU (454 aa).

The tract at residues 1–226 is pyrophosphorylase; the sequence is MALNVVILAA…AIEVEGANNR (226 aa). UDP-N-acetyl-alpha-D-glucosamine contacts are provided by residues 8–11, Lys-22, Gln-73, 78–79, 100–102, Gly-137, Glu-151, Asn-166, and Asn-224; these read LAAG, GT, and YGD. Residue Asp-102 participates in Mg(2+) binding. Mg(2+) is bound at residue Asn-224. Residues 227-247 are linker; it reads VQLAQLERAYQAREAEKLMIA. An N-acetyltransferase region spans residues 248-454; the sequence is GANLRDPSRI…GWQRPVKIKE (207 aa). Residues Arg-330 and Lys-348 each coordinate UDP-N-acetyl-alpha-D-glucosamine. His-360 (proton acceptor) is an active-site residue. Tyr-363 and Asn-374 together coordinate UDP-N-acetyl-alpha-D-glucosamine. Acetyl-CoA-binding positions include Ala-377, 383-384, Ser-402, Ala-420, and Arg-437; that span reads NY.

This sequence in the N-terminal section; belongs to the N-acetylglucosamine-1-phosphate uridyltransferase family. It in the C-terminal section; belongs to the transferase hexapeptide repeat family. As to quaternary structure, homotrimer. Mg(2+) serves as cofactor.

The protein localises to the cytoplasm. The catalysed reaction is alpha-D-glucosamine 1-phosphate + acetyl-CoA = N-acetyl-alpha-D-glucosamine 1-phosphate + CoA + H(+). It catalyses the reaction N-acetyl-alpha-D-glucosamine 1-phosphate + UTP + H(+) = UDP-N-acetyl-alpha-D-glucosamine + diphosphate. The protein operates within nucleotide-sugar biosynthesis; UDP-N-acetyl-alpha-D-glucosamine biosynthesis; N-acetyl-alpha-D-glucosamine 1-phosphate from alpha-D-glucosamine 6-phosphate (route II): step 2/2. It participates in nucleotide-sugar biosynthesis; UDP-N-acetyl-alpha-D-glucosamine biosynthesis; UDP-N-acetyl-alpha-D-glucosamine from N-acetyl-alpha-D-glucosamine 1-phosphate: step 1/1. Its pathway is bacterial outer membrane biogenesis; LPS lipid A biosynthesis. Catalyzes the last two sequential reactions in the de novo biosynthetic pathway for UDP-N-acetylglucosamine (UDP-GlcNAc). The C-terminal domain catalyzes the transfer of acetyl group from acetyl coenzyme A to glucosamine-1-phosphate (GlcN-1-P) to produce N-acetylglucosamine-1-phosphate (GlcNAc-1-P), which is converted into UDP-GlcNAc by the transfer of uridine 5-monophosphate (from uridine 5-triphosphate), a reaction catalyzed by the N-terminal domain. This is Bifunctional protein GlmU from Shewanella sp. (strain MR-7).